Here is a 124-residue protein sequence, read N- to C-terminus: Large ribosomal subunit protein uL22c (124 aa).

It belongs to the universal ribosomal protein uL22 family. Part of the 50S ribosomal subunit.

The protein localises to the plastid. The protein resides in the chloroplast. Its function is as follows. This protein binds specifically to 23S rRNA. In terms of biological role, the globular domain of the protein is located near the polypeptide exit tunnel on the outside of the subunit, while an extended beta-hairpin is found that lines the wall of the exit tunnel in the center of the 70S ribosome. This chain is Large ribosomal subunit protein uL22c (rpl22), found in Amborella trichopoda.